The following is a 324-amino-acid chain: Beta-ketoacyl-[acyl-carrier-protein] synthase III (324 aa).

Active-site residues include Cys112 and His251. Residues 252 to 256 (QANLR) form an ACP-binding region. Asn281 is an active-site residue.

The protein belongs to the thiolase-like superfamily. FabH family. Homodimer.

The protein resides in the cytoplasm. It catalyses the reaction malonyl-[ACP] + acetyl-CoA + H(+) = 3-oxobutanoyl-[ACP] + CO2 + CoA. It functions in the pathway lipid metabolism; fatty acid biosynthesis. Its function is as follows. Catalyzes the condensation reaction of fatty acid synthesis by the addition to an acyl acceptor of two carbons from malonyl-ACP. Catalyzes the first condensation reaction which initiates fatty acid synthesis and may therefore play a role in governing the total rate of fatty acid production. Possesses both acetoacetyl-ACP synthase and acetyl transacylase activities. Its substrate specificity determines the biosynthesis of branched-chain and/or straight-chain of fatty acids. This Clostridium perfringens (strain SM101 / Type A) protein is Beta-ketoacyl-[acyl-carrier-protein] synthase III.